The primary structure comprises 220 residues: Probable chemoreceptor glutamine deamidase CheD (220 aa).

The protein belongs to the CheD family.

It carries out the reaction L-glutaminyl-[protein] + H2O = L-glutamyl-[protein] + NH4(+). In terms of biological role, probably deamidates glutamine residues to glutamate on methyl-accepting chemotaxis receptors (MCPs), playing an important role in chemotaxis. This Cupriavidus metallidurans (strain ATCC 43123 / DSM 2839 / NBRC 102507 / CH34) (Ralstonia metallidurans) protein is Probable chemoreceptor glutamine deamidase CheD.